A 456-amino-acid chain; its full sequence is Bifunctional protein GlmU (456 aa).

The interval 1–230 (MDKRFAVVLA…FQETLGVNDR (230 aa)) is pyrophosphorylase. UDP-N-acetyl-alpha-D-glucosamine is bound by residues 9 to 12 (LAAG), Lys23, Gln73, and 78 to 79 (GT). Asp103 lines the Mg(2+) pocket. The UDP-N-acetyl-alpha-D-glucosamine site is built by Gly140, Glu155, Asn170, and Asn228. Mg(2+) is bound at residue Asn228. Residues 231–251 (VALSQAEQFMKERINKRHMQN) are linker. The tract at residues 252–456 (GVTLIDPMNT…DDYVKNIHKK (205 aa)) is N-acetyltransferase. UDP-N-acetyl-alpha-D-glucosamine contacts are provided by Arg333 and Lys351. Catalysis depends on His363, which acts as the Proton acceptor. Tyr366 and Asn377 together coordinate UDP-N-acetyl-alpha-D-glucosamine. Acetyl-CoA contacts are provided by residues 386–387 (NY), Ala423, and Arg440.

In the N-terminal section; belongs to the N-acetylglucosamine-1-phosphate uridyltransferase family. The protein in the C-terminal section; belongs to the transferase hexapeptide repeat family. In terms of assembly, homotrimer. It depends on Mg(2+) as a cofactor.

It is found in the cytoplasm. The catalysed reaction is alpha-D-glucosamine 1-phosphate + acetyl-CoA = N-acetyl-alpha-D-glucosamine 1-phosphate + CoA + H(+). The enzyme catalyses N-acetyl-alpha-D-glucosamine 1-phosphate + UTP + H(+) = UDP-N-acetyl-alpha-D-glucosamine + diphosphate. Its pathway is nucleotide-sugar biosynthesis; UDP-N-acetyl-alpha-D-glucosamine biosynthesis; N-acetyl-alpha-D-glucosamine 1-phosphate from alpha-D-glucosamine 6-phosphate (route II): step 2/2. The protein operates within nucleotide-sugar biosynthesis; UDP-N-acetyl-alpha-D-glucosamine biosynthesis; UDP-N-acetyl-alpha-D-glucosamine from N-acetyl-alpha-D-glucosamine 1-phosphate: step 1/1. It functions in the pathway bacterial outer membrane biogenesis; LPS lipid A biosynthesis. In terms of biological role, catalyzes the last two sequential reactions in the de novo biosynthetic pathway for UDP-N-acetylglucosamine (UDP-GlcNAc). The C-terminal domain catalyzes the transfer of acetyl group from acetyl coenzyme A to glucosamine-1-phosphate (GlcN-1-P) to produce N-acetylglucosamine-1-phosphate (GlcNAc-1-P), which is converted into UDP-GlcNAc by the transfer of uridine 5-monophosphate (from uridine 5-triphosphate), a reaction catalyzed by the N-terminal domain. The chain is Bifunctional protein GlmU from Bacillus subtilis (strain 168).